The sequence spans 367 residues: Terpene cyclase verU1 (367 aa).

The chain crosses the membrane as a helical span at residues 8–28 (IRCSLLLLGLVGIYTVWISSF). The N-linked (GlcNAc...) asparagine glycan is linked to N50. Helical transmembrane passes span 57–77 (FTGI…YWPV), 85–105 (LSLI…LFAL), 120–140 (MAMF…PIYC), 169–189 (CLLG…PAVV), 197–217 (IIAL…LTHL), 239–259 (ISAM…SLLA), 292–312 (FQWD…GLHI), and 327–347 (LIPE…AALY). The N-linked (GlcNAc...) asparagine glycan is linked to N352.

It belongs to the membrane-bound ascI terpene cyclase family.

It localises to the membrane. The protein operates within secondary metabolite biosynthesis; terpenoid biosynthesis. Its pathway is mycotoxin biosynthesis. Its function is as follows. Terpene cyclase; part of the gene cluster that mediates the biosynthesis of the neurotoxin verrucosidin, a methylated alpha-pyrone polyketide that inhibits oxidative phosphorylation in mitochondria and thereby causes neurological diseases. The carbon backbone of verrucosidin is synthesized by the HR-PKS verA, and further modified by the other verrucodidin cluster enzymes. This Penicillium polonicum protein is Terpene cyclase verU1.